We begin with the raw amino-acid sequence, 402 residues long: Queuine tRNA-ribosyltransferase-like protein (402 aa).

This sequence belongs to the queuine tRNA-ribosyltransferase family.

The chain is Queuine tRNA-ribosyltransferase-like protein from Theileria parva (East coast fever infection agent).